Here is a 291-residue protein sequence, read N- to C-terminus: Elongation factor Ts (291 aa).

Positions 79-82 (TDFV) are involved in Mg(2+) ion dislocation from EF-Tu.

This sequence belongs to the EF-Ts family.

It is found in the cytoplasm. Its function is as follows. Associates with the EF-Tu.GDP complex and induces the exchange of GDP to GTP. It remains bound to the aminoacyl-tRNA.EF-Tu.GTP complex up to the GTP hydrolysis stage on the ribosome. The sequence is that of Elongation factor Ts from Jannaschia sp. (strain CCS1).